Here is a 443-residue protein sequence, read N- to C-terminus: Xaa-Pro dipeptidase (443 aa).

Mn(2+)-binding residues include aspartate 241, aspartate 252, histidine 333, glutamate 378, and glutamate 417.

The protein belongs to the peptidase M24B family. Bacterial-type prolidase subfamily. It depends on Mn(2+) as a cofactor.

It carries out the reaction Xaa-L-Pro dipeptide + H2O = an L-alpha-amino acid + L-proline. In terms of biological role, splits dipeptides with a prolyl residue in the C-terminal position. In Actinobacillus pleuropneumoniae serotype 5b (strain L20), this protein is Xaa-Pro dipeptidase.